A 105-amino-acid chain; its full sequence is MPLKYTCYVPNEWANNSKAALKKTITKTACKQLVENGNIEGATMSLQNVTAKLVNYNYQPWMRKTGDDKNYPDPKQYFGMRMDCIYCTASKVSFHFLDLTKSQKP.

This is an uncharacterized protein from Microplitis demolitor (Parasitoid wasp).